We begin with the raw amino-acid sequence, 468 residues long: Meiotically up-regulated gene 111 protein (468 aa).

12 consecutive transmembrane segments (helical) span residues 13-33, 59-79, 92-112, 116-136, 158-178, 190-210, 285-305, 330-350, 356-376, 382-402, 417-437, and 446-466; these read LVLIYLWYLVDCTSFSMNSVT, IVSASSCLLQYLVALVVVPFY, VFTTWVGEEYFFFASTLSILY, FPTCAYFVIFSISFLLGISGT, IVVLNSIFVVSSCIGPFLGSI, LISWTIHFINFVFHSLLAVFF, PIPIVLLCFFLYSLLTPFFDI, FGSLLTCSVCLFLTYVGGFSV, TMLIGLTATTLIIFILYFATA, LALFYGITSSIGPSIHGLVAA, ALLEASATFISYPFQSLAFIV, and FFIGPICICLLGSISSYLLLG.

It localises to the membrane. Functionally, has a role in meiosis. In Schizosaccharomyces pombe (strain 972 / ATCC 24843) (Fission yeast), this protein is Meiotically up-regulated gene 111 protein (mug111).